Consider the following 1584-residue polypeptide: Adhesion G protein-coupled receptor B1 (1584 aa).

Residues 1 to 30 (MRGQAAAPGPVWILAPLLLLLLLLGRRARA) form the signal peptide. Topologically, residues 31 to 948 (AAGADAGPGP…ANMEKATLPS (918 aa)) are extracellular. An N-linked (GlcNAc...) asparagine glycan is attached at Asn-64. The interval 146 to 167 (RRQQPPQHDGLRPRAGPPGPTD) is disordered. One can recognise a TSP type-1 1 domain in the interval 261 to 315 (TGGWKLWSLWGECTRDCGGGLQTRTRTCLPAPGVEGGGCEGVLEEGRQCNREACG). Disulfide bonds link Cys-273/Cys-309, Cys-277/Cys-314, and Cys-288/Cys-299. The tract at residues 313 to 335 (ACGPAGRTSSRSQSLRSTDARRR) is disordered. Residues 319 to 329 (RTSSRSQSLRS) show a composition bias toward low complexity. TSP type-1 domains are found at residues 354 to 407 (DPAA…AVCP), 409 to 462 (HGAW…ALCP), 467 to 520 (DGNW…QQCP), and 522 to 575 (DGKW…QRCP). Cystine bridges form between Cys-366–Cys-400, Cys-370–Cys-406, Cys-381–Cys-390, Cys-421–Cys-456, Cys-425–Cys-461, Cys-436–Cys-446, Cys-479–Cys-514, Cys-483–Cys-519, Cys-494–Cys-504, Cys-534–Cys-569, Cys-538–Cys-574, Cys-549–Cys-559, Cys-581–Cys-616, and Cys-604–Cys-634. N-linked (GlcNAc...) asparagine glycosylation is present at Asn-401. Asn-607 carries N-linked (GlcNAc...) asparagine glycosylation. The residue at position 609 (Thr-609) is a Phosphothreonine. N-linked (GlcNAc...) asparagine glycosylation is found at Asn-692, Asn-844, Asn-877, and Asn-881. The GAIN-B domain occupies 760 to 939 (RDAYQVTDNL…AILAQLSADA (180 aa)). Intrachain disulfides connect Cys-884–Cys-921 and Cys-909–Cys-923. The segment at 884–939 (CILWDETDVPSSSAPPQLGPWSWRGCRTVPLDALRTRCLCDRLSTFAILAQLSADA) is GPS. The N-terminal stalk following vasculostatin-120 cleavage which is not required for signaling activity stretch occupies residues 927 to 943 (STFAILAQLSADANMEK). Residues 949-969 (VTLIVGCGVSSLTLLMLVIIY) traverse the membrane as a helical segment. Over 970 to 980 (VSVWRYIRSER) the chain is Cytoplasmic. A helical membrane pass occupies residues 981 to 1001 (SVILINFCLSIISSNALILIG). Residues 1002–1008 (QTQTRNK) are Extracellular-facing. A helical membrane pass occupies residues 1009-1029 (VVCTLVAAFLHFFFLSSFCWV). At 1030 to 1052 (LTEAWQSYMAVTGHLRNRLIRKR) the chain is on the cytoplasmic side. Residues 1053–1073 (FLCLGWGLPALVVAISVGFTK) traverse the membrane as a helical segment. The Extracellular segment spans residues 1074–1093 (AKGYSTMNYCWLSLEGGLLY). A helical membrane pass occupies residues 1094 to 1114 (AFVGPAAAVVLVNMVIGILVF). Residues 1115 to 1136 (NKLVSKDGITDKKLKERAGASL) are Cytoplasmic-facing. The chain crosses the membrane as a helical span at residues 1137-1157 (WSSCVVLPLLALTWMSAVLAV). Residues 1158-1166 (TDRRSALFQ) are Extracellular-facing. Residues 1167–1187 (ILFAVFDSLEGFVIVMVHCIL) form a helical membrane-spanning segment. The Cytoplasmic portion of the chain corresponds to 1188–1584 (RREVQDAVKC…QDIIDLQTEV (397 aa)). The tract at residues 1365–1584 (YSIHIDQMPQ…QDIIDLQTEV (220 aa)) is involved in interaction with MAGI1. Disordered regions lie at residues 1385 to 1475 (EASL…RRKS) and 1501 to 1548 (RKLQ…KKEL). The span at 1391–1439 (RSPPSRQPPSGGPPEAPPAQPPPPPPPPPPPPQQPLPPPPNLEPAPPSL) shows a compositional bias: pro residues. The segment covering 1453–1469 (TGPSTKNENVATLSVSS) has biased composition (polar residues). The residue at position 1469 (Ser-1469) is a Phosphoserine. Positions 1501–1522 (RKLQHAAEKDKEVLGPDSKPEK) are enriched in basic and acidic residues. The indispensable for interaction with MAGI1 stretch occupies residues 1581–1584 (QTEV).

This sequence belongs to the G-protein coupled receptor 2 family. LN-TM7 subfamily. Interacts with ELMO1 and DOCK. When bound to ELMO1 and DOCK1, acts as a module to promote apoptotic cell engulfment. Interacts with MDM2; the interaction results in inhibition of MDM2-mediated ubiquitination and degradation of DLG4/PSD95. Interacts with PARD3 and TIAM1; the interaction is required for correct dendritic. localization of PARD3 and TIAM1 and for dendritic spine formation. Interacts with MAGI1. Interacts with MAGI3. Interacts with BAIAP2. Interacts with PHYHIP. Interacts with DLG4 (via PDZ domain). Vasculostatin-120: Interacts with CD36. Vasculostatin-120: Interacts with ARRB2. Interacts with BAIAP3; this interaction is direct. Proteolytically cleaved to produce vasculostatin-40 and vasculostatin-120. Vasculostatin-40 is the major form and is produced through proteolytic cleavage by MMP14 between residues 321 and 329 with cleavage likely to be between Ser-326 and Leu-327. Post-translationally, ubiquitinated. Expressed in brain (at protein level). Expressed on mononuclear phagocytes and monocyte-derived macrophages in the gastric mucosa (at protein level). Expressed in normal pancreatic tissue but not in pancreatic tumor tissue. Reduced or no expression is observed in some glioblastomas.

The protein localises to the cell membrane. Its subcellular location is the cell projection. It is found in the phagocytic cup. The protein resides in the cell junction. It localises to the focal adhesion. The protein localises to the dendritic spine. Its subcellular location is the postsynaptic density. It is found in the secreted. Phosphatidylserine receptor which enhances the engulfment of apoptotic cells. Also mediates the binding and engulfment of Gram-negative bacteria. Stimulates production of reactive oxygen species by macrophages in response to Gram-negative bacteria, resulting in enhanced microbicidal macrophage activity. In the gastric mucosa, required for recognition and engulfment of apoptotic gastric epithelial cells. Promotes myoblast fusion. Activates the Rho pathway in a G-protein-dependent manner. Inhibits MDM2-mediated ubiquitination and degradation of DLG4/PSD95, promoting DLG4 stability and regulating synaptic plasticity. Required for the formation of dendritic spines by ensuring the correct localization of PARD3 and TIAM1. Potent inhibitor of angiogenesis in brain and may play a significant role as a mediator of the p53/TP53 signal in suppression of glioblastoma. Functionally, inhibits angiogenesis in a CD36-dependent manner. In terms of biological role, inhibits angiogenesis. The protein is Adhesion G protein-coupled receptor B1 of Homo sapiens (Human).